We begin with the raw amino-acid sequence, 1135 residues long: Eukaryotic translation initiation factor 3 subunit A (1135 aa).

Residues 319–501 (LQRMAAHVLL…NSIYFGTDLT (183 aa)) form the PCI domain. 2 stretches are compositionally biased toward basic and acidic residues: residues 588 to 623 (QNNA…EERE) and 829 to 899 (AAEE…RGGD). 2 disordered regions span residues 588–631 (QNNA…QNEI) and 829–1135 (AAEE…VKRR). At S908 the chain carries Phosphoserine. Basic and acidic residues-rich tracts occupy residues 920 to 971 (ERNE…EPDS), 985 to 1045 (SRDD…EPQR), 1053 to 1081 (DAPR…RGDQ), and 1104 to 1125 (AREE…KAAD).

The protein belongs to the eIF-3 subunit A family. As to quaternary structure, component of the eukaryotic translation initiation factor 3 (eIF-3) complex. The eIF-3 complex interacts with pix.

The protein localises to the cytoplasm. Functionally, RNA-binding component of the eukaryotic translation initiation factor 3 (eIF-3) complex, which is involved in protein synthesis of a specialized repertoire of mRNAs and, together with other initiation factors, stimulates binding of mRNA and methionyl-tRNAi to the 40S ribosome. The eIF-3 complex specifically targets and initiates translation of a subset of mRNAs involved in cell proliferation. This Drosophila erecta (Fruit fly) protein is Eukaryotic translation initiation factor 3 subunit A.